A 394-amino-acid chain; its full sequence is Elongation factor Tu 1 (394 aa).

One can recognise a tr-type G domain in the interval 10-204 (KPHVNVGTIG…YLDSYIPEPE (195 aa)). The G1 stretch occupies residues 19 to 26 (GHVDHGKT). Position 19 to 26 (19 to 26 (GHVDHGKT)) interacts with GTP. Threonine 26 provides a ligand contact to Mg(2+). The interval 60-64 (GITIN) is G2. The segment at 81–84 (DCPG) is G3. Residues 81 to 85 (DCPGH) and 136 to 139 (NKCD) contribute to the GTP site. The segment at 136–139 (NKCD) is G4. The G5 stretch occupies residues 174-176 (SAL).

It belongs to the TRAFAC class translation factor GTPase superfamily. Classic translation factor GTPase family. EF-Tu/EF-1A subfamily. In terms of assembly, monomer.

The protein resides in the cytoplasm. It catalyses the reaction GTP + H2O = GDP + phosphate + H(+). Functionally, GTP hydrolase that promotes the GTP-dependent binding of aminoacyl-tRNA to the A-site of ribosomes during protein biosynthesis. This chain is Elongation factor Tu 1, found in Serratia proteamaculans (strain 568).